We begin with the raw amino-acid sequence, 412 residues long: Adenosine receptor A2a (412 aa).

Topologically, residues 1–7 (MSTMGSW) are extracellular. A helical transmembrane segment spans residues 8–32 (VYITVELAIAVLAILGNVLVCWAVW). Topologically, residues 33–42 (LNSNLQNVTN) are cytoplasmic. A helical membrane pass occupies residues 43-66 (YFVVSLAAADIAVGVLAIPFAITI). Over 67 to 77 (STGFCAACHNC) the chain is Extracellular. Cystine bridges form between Cys71-Cys159, Cys74-Cys146, and Cys77-Cys166. A helical membrane pass occupies residues 78 to 100 (LFFACFVLVLTQSSIFSLLAIAI). The Cytoplasmic segment spans residues 101–120 (DRYIAIRIPLRYNGLVTGTR). Residues 121 to 143 (AKGIIAVCWVLSFAIGLTPMLGW) traverse the membrane as a helical segment. Residues 144-173 (NNCSQPKEGRNYSQGCGEGQVACLFEDVVP) lie on the Extracellular side of the membrane. Asn145 and Asn154 each carry an N-linked (GlcNAc...) asparagine glycan. Residue Glu169 coordinates adenosine. Residues 174–198 (MNYMVYYNFFAFVLVPLLLMLGVYL) traverse the membrane as a helical segment. Residues 199–234 (RIFLAARRQLKQMESQPLPGERARSTLQKEVHAAKS) lie on the Cytoplasmic side of the membrane. The helical transmembrane segment at 235–258 (LAIIVGLFALCWLPLHIINCFTFF) threads the bilayer. An adenosine-binding site is contributed by Asn253. A disulfide bond links Cys259 and Cys262. The Extracellular segment spans residues 259 to 266 (CPECSHAP). The helical transmembrane segment at 267-290 (LWLMYLTIVLSHTNSVVNPFIYAY) threads the bilayer. Ser277 and His278 together coordinate adenosine. Over 291 to 412 (RIREFRQTFR…PLAQDGAGVS (122 aa)) the chain is Cytoplasmic. Positions 392 to 412 (GACPESPGLEGPLAQDGAGVS) are disordered.

This sequence belongs to the G-protein coupled receptor 1 family. In terms of assembly, interacts (via cytoplasmic C-terminal domain) with USP4; the interaction is direct. May interact with DRD4. Interacts with NECAB2. Interacts (via cytoplasmic C-terminal domain) with GAS2L2; interaction enhances receptor-mediated adenylyl cyclase activity. In terms of processing, ubiquitinated. Deubiquitinated by USP4; leading to stabilization and expression at the cell surface.

It is found in the cell membrane. Its function is as follows. Receptor for adenosine. The activity of this receptor is mediated by G proteins which activate adenylyl cyclase. This Canis lupus familiaris (Dog) protein is Adenosine receptor A2a (ADORA2A).